A 66-amino-acid chain; its full sequence is Alpha-actitoxin-Ms11a-1 (66 aa).

The N-terminal stretch at Met1–Ala24 is a signal peptide. 3 disulfide bridges follow: Cys26–Cys41, Cys33–Cys46, and Cys40–Cys61.

The protein resides in the secreted. It is found in the nematocyst. In terms of biological role, alpha-toxins act on postsynaptic membranes, they bind to the nicotinic acetylcholine receptors (nAChR) and thus inhibit them. This toxin competes with alpha-bungarotoxin for binding to orthosteric sites on muscle-type T.carlifornicus (IC(50)=408 nM) and human alpha-7/CHRNA7 nAChRs (IC(50)=14.16 uM). This chain is Alpha-actitoxin-Ms11a-1, found in Metridium senile (Brown sea anemone).